Here is a 283-residue protein sequence, read N- to C-terminus: Protease HtpX homolog (283 aa).

2 helical membrane passes run 7–27 (TAVLMAAITALFMAIGSVLGG) and 29–49 (QGMAIALVVALGMNFFSYWFS). H131 is a binding site for Zn(2+). Residue E132 is part of the active site. A Zn(2+)-binding site is contributed by H135. 2 helical membrane passes run 146 to 166 (ISATMAGAISMLANFAMFFGG) and 177 to 197 (IAGILVMLLAPLAASLIQMAI). E202 provides a ligand contact to Zn(2+).

It belongs to the peptidase M48B family. Requires Zn(2+) as cofactor.

It localises to the cell inner membrane. The chain is Protease HtpX homolog from Methylibium petroleiphilum (strain ATCC BAA-1232 / LMG 22953 / PM1).